Consider the following 8515-residue polypeptide: Nonribosomal peptide synthetase 8 (8515 aa).

Adenylation stretches follow at residues 59-736 and 1163-1705; these read REHH…YRCS and AKLS…EWVE. Residues 587-1159 are condensation 1; sequence RRVVQWLENL…TVGEVALVGD (573 aa). In terms of domain architecture, Carrier 1 spans 615 to 691; sequence EPETAMERRL…ELAPRVKVAE (77 aa). O-(pantetheine 4'-phosphoryl)serine is present on Ser652. The region spanning 1732–1808 is the Carrier 2 domain; that stretch reads RGLTPTETVI…KLGRHADHSS (77 aa). Ser1769 is subject to O-(pantetheine 4'-phosphoryl)serine. The tract at residues 1830–2273 is epimerase 1; sequence LSPIQQWFFE…TLYDCPLAAL (444 aa). The segment at 2301 to 2709 is condensation 2; the sequence is SHIQEGILLS…RSPEAVLHDL (409 aa). Positions 2733-3266 are adenylation 3; that stretch reads QCLHWLIEQW…RMILSWLSEP (534 aa). A Carrier 3 domain is found at 3286–3362; sequence TTLGPVEKQM…KVTPRTISLS (77 aa). Ser3323 carries the O-(pantetheine 4'-phosphoryl)serine modification. The condensation 3 stretch occupies residues 3406-3819; sequence SPMQEGILLA…DNSGCSVKTV (414 aa). Residues 3857–3933 enclose the Carrier 4 domain; sequence EPTNLIALTV…EVFEHARFSD (77 aa). Ser3894 is subject to O-(pantetheine 4'-phosphoryl)serine. Positions 3953-4392 are epimerase 2; the sequence is LSPIQKLHFH…TPSDFQLLSL (440 aa). Residues 4420–4823 are condensation 4; it reads PCSPMQEGIL…ARPRARLGTI (404 aa). Positions 4837–5363 are adenylation 4; the sequence is WNEQARRPVV…RKVNKWLESF (527 aa). Positions 5385-5461 constitute a Carrier 5 domain; it reads PPLTPIQQTI…SLAACATAII (77 aa). Ser5422 bears the O-(pantetheine 4'-phosphoryl)serine mark. The condensation 5 stretch occupies residues 5508 to 5923; that stretch reads SPMQEGILFS…SLVDHLSLCS (416 aa). The segment at 5941–6459 is adenylation 5; sequence ELRQCLHELI…GKVDRQALRR (519 aa). Residues 6482-6558 form the Carrier 6 domain; that stretch reads PISTAEEQQM…DLATLLESPA (77 aa). Residue Ser6519 is modified to O-(pantetheine 4'-phosphoryl)serine. The segment at 6606–6992 is condensation 6; it reads CTPLQESLMA…SQMKSVMGTL (387 aa). An adenylation 6 region spans residues 7030–7544; the sequence is VEDLIISRAQ…SSGKLARKGV (515 aa). A Carrier 7 domain is found at 7575-7651; the sequence is IASSSVERAI…HLASREDLTA (77 aa). O-(pantetheine 4'-phosphoryl)serine is present on Ser7612. The tract at residues 7670 to 8119 is epimerase 3; sequence LTPIQRFFFC…DYPRARLDYT (450 aa). The segment at 8164 to 8504 is condensation 7; that stretch reads HFIWKIAGTK…DPTSPLQFAD (341 aa). The span at 8488 to 8500 shows a compositional bias: polar residues; it reads AVNSVSSDPTSPL. Residues 8488 to 8515 form a disordered region; that stretch reads AVNSVSSDPTSPLQFADGQDPMPVSHQP.

It belongs to the NRP synthetase family.

In terms of biological role, nonribosomal peptide synthesis (NRPS) is a key mechanism responsible for the biosynthesis of bioactive metabolites which are potentially contributing to organismal virulence. However, contarary to other nonribosomal peptide synthases, NRPS8 does not encode a secreted peptide, but has more a structural role since it is involved in germ tube formation. In Aspergillus fumigatus (strain ATCC MYA-4609 / CBS 101355 / FGSC A1100 / Af293) (Neosartorya fumigata), this protein is Nonribosomal peptide synthetase 8 (NRPS8).